The following is a 369-amino-acid chain: Cyclin-I2 (369 aa).

A disordered region spans residues 1–116; the sequence is MASGAQLPPQ…SRKPRNLEGD (116 aa). 2 stretches are compositionally biased toward low complexity: residues 64-76 and 83-101; these read AASL…AVPV and APAG…EQAP.

This sequence belongs to the cyclin family.

In Homo sapiens (Human), this protein is Cyclin-I2 (CCNI2).